Reading from the N-terminus, the 159-residue chain is MPRKALKPKEKRGLPEPDSKFGSVQIARFISKLNFEGKKSIAESIMYGSFDIIKERTGEDPVSVFNRALENIRPLLEVRPRRVGGATYQVPMEVPVIRSTTLAINWLIGIARSKTGKPMREKLAQEIIDASKKEGAAVKKREDTHKMAEANKAFAHYRW.

This sequence belongs to the universal ribosomal protein uS7 family. As to quaternary structure, part of the 30S ribosomal subunit. Contacts proteins S9 and S11.

Its function is as follows. One of the primary rRNA binding proteins, it binds directly to 16S rRNA where it nucleates assembly of the head domain of the 30S subunit. Is located at the subunit interface close to the decoding center, probably blocks exit of the E-site tRNA. This is Small ribosomal subunit protein uS7 from Endomicrobium trichonymphae.